The chain runs to 422 residues: MLRLSRLPLPPVLQRLTGFSLFVWRRAMQNRCLQVAASLTFTTLLSLVPLITITLIVVAAFPVFEELSSQFKEFLLRNLVPDFAGRIISVYLKQFTDNAGRLTAVGLALLAFTSLSLMLTIDRTFNAIWQVQRPRKLLHNMLVYWTVLTLGPLLLGVGISGSAWILNWSGLARTAPGLAGIIQNLGSLTLATVMLTVLYGLVPNCYVPRWHALIGGALTALTLGVAQAGFGLYVEISRTYQFIYGAFATFPFLLIWLQLMWLTVLIGAELTASLSYWKGDVWRREGDSQRRFCDALDTLVRLSQAQVHGRALGQADLRHHIDTGYDEIGRILDELARLGLVQRSAEGLWALLYRPESVSLLRLWHHFVLDLNASPADDAISHSLTELVRPLEAGLDISLAEFLHRYPPAGPAVTLPAVPRPG.

Helical transmembrane passes span 44-64 (LLSLVPLITITLIVVAAFPVF), 102-122 (LTAVGLALLAFTSLSLMLTID), 141-161 (MLVYWTVLTLGPLLLGVGISG), 178-198 (LAGIIQNLGSLTLATVMLTVL), 212-232 (ALIGGALTALTLGVAQAGFGL), and 246-266 (AFATFPFLLIWLQLMWLTVLI).

It belongs to the UPF0761 family.

Its subcellular location is the cell inner membrane. The protein is UPF0761 membrane protein LHK_02978 of Laribacter hongkongensis (strain HLHK9).